The sequence spans 501 residues: ATP synthase subunit alpha (501 aa).

169–176 (GDRQTGKT) provides a ligand contact to ATP.

Belongs to the ATPase alpha/beta chains family. As to quaternary structure, F-type ATPases have 2 components, CF(1) - the catalytic core - and CF(0) - the membrane proton channel. CF(1) has five subunits: alpha(3), beta(3), gamma(1), delta(1), epsilon(1). CF(0) has three main subunits: a(1), b(2) and c(9-12). The alpha and beta chains form an alternating ring which encloses part of the gamma chain. CF(1) is attached to CF(0) by a central stalk formed by the gamma and epsilon chains, while a peripheral stalk is formed by the delta and b chains.

The protein localises to the cell membrane. The enzyme catalyses ATP + H2O + 4 H(+)(in) = ADP + phosphate + 5 H(+)(out). Produces ATP from ADP in the presence of a proton gradient across the membrane. The alpha chain is a regulatory subunit. The chain is ATP synthase subunit alpha from Desulforamulus reducens (strain ATCC BAA-1160 / DSM 100696 / MI-1) (Desulfotomaculum reducens).